The following is a 577-amino-acid chain: MRASRFFISTLKEAPSDAEIVSHKLMMRAGMIKRLGSGIYTYMPIGLRVIRKVEAIVREEMNRAHAIELLMPLVQPAELWQETGRWDKMGPELMRVKDRHGREYAIQPTSEEVVTDVVRSEIKSYRQLPLNFYHIQTKFRDERRPRFGLMRGREFTMKDAYSFDRDAEGLKRSYQIMFDAYVKIFNRFGLQFRAVAADNGAIGGSGSHEFHVIADTGEDAIVYCPTSDYAANMEAAEAIAPAVPRAAATQTLTKTATPGKAKCEDVAALLNLPLAQTVKSIVLTVEKEDKGVVSKEIWLLLLRGDHELNEVKAAKIPGLTDYRFANEAEIVEWFGTPPGYLGPINTKKPVKVVVDRTVAAMSDFVCGANEVDFHFTGVNWGRDLPEAMVLDLRNVVEGDPSPDGKGVLAIQRGIEVGHVFQLGTAYSEKMKATYLDENGKPQLIQMGCYGIGVTRIVGAAIEQNFDDRGIIWPAALAPFEVVLCPMGYDRSESVKTETDKLYEALLAAGVDVILDDRGERPGAMFADWELIGAPHRIVIGERGLKEGALEYKGRRDADATAVALDDMLAFVQARLAA.

Belongs to the class-II aminoacyl-tRNA synthetase family. ProS type 1 subfamily. In terms of assembly, homodimer.

The protein resides in the cytoplasm. The enzyme catalyses tRNA(Pro) + L-proline + ATP = L-prolyl-tRNA(Pro) + AMP + diphosphate. Its function is as follows. Catalyzes the attachment of proline to tRNA(Pro) in a two-step reaction: proline is first activated by ATP to form Pro-AMP and then transferred to the acceptor end of tRNA(Pro). As ProRS can inadvertently accommodate and process non-cognate amino acids such as alanine and cysteine, to avoid such errors it has two additional distinct editing activities against alanine. One activity is designated as 'pretransfer' editing and involves the tRNA(Pro)-independent hydrolysis of activated Ala-AMP. The other activity is designated 'posttransfer' editing and involves deacylation of mischarged Ala-tRNA(Pro). The misacylated Cys-tRNA(Pro) is not edited by ProRS. In Herminiimonas arsenicoxydans, this protein is Proline--tRNA ligase.